The sequence spans 206 residues: Ribonuclease HII (206 aa).

In terms of domain architecture, RNase H type-2 spans 14 to 206 (ALVCGIDEAG…FRLRQLGEKP (193 aa)). A divalent metal cation is bound by residues Asp-20, Glu-21, and Asp-117.

Belongs to the RNase HII family. It depends on Mn(2+) as a cofactor. The cofactor is Mg(2+).

Its subcellular location is the cytoplasm. It carries out the reaction Endonucleolytic cleavage to 5'-phosphomonoester.. Functionally, endonuclease that specifically degrades the RNA of RNA-DNA hybrids. This chain is Ribonuclease HII, found in Pelodictyon phaeoclathratiforme (strain DSM 5477 / BU-1).